The sequence spans 142 residues: Ribosome-binding factor A (142 aa).

The segment at 118-142 is disordered; it reads DEAKQQEHGTVENAKQDGDKAEDDK.

The protein belongs to the RbfA family. Monomer. Binds 30S ribosomal subunits, but not 50S ribosomal subunits or 70S ribosomes.

It localises to the cytoplasm. Functionally, one of several proteins that assist in the late maturation steps of the functional core of the 30S ribosomal subunit. Associates with free 30S ribosomal subunits (but not with 30S subunits that are part of 70S ribosomes or polysomes). Required for efficient processing of 16S rRNA. May interact with the 5'-terminal helix region of 16S rRNA. The protein is Ribosome-binding factor A of Shewanella piezotolerans (strain WP3 / JCM 13877).